The chain runs to 1433 residues: Regulatory protein CAT8 (1433 aa).

The span at 20-38 shows a compositional bias: polar residues; sequence GSQALSGPSISNRTSSSEA. Residues 20–40 are disordered; sequence GSQALSGPSISNRTSSSEANP. The segment at residues 70–97 is a DNA-binding region (zn(2)-C6 fungal-type); sequence CDRCRSKKTRCDGKRPQCSQCAAVGFEC. Positions 936 to 946 are enriched in polar residues; sequence KPLFGSQSKNS. 4 disordered regions span residues 936 to 1024, 1137 to 1162, 1200 to 1236, and 1324 to 1433; these read KPLF…DTKK, QNPE…NNLS, SASA…ILGS, and LNPT…QNAK. Basic and acidic residues-rich tracts occupy residues 947–965 and 994–1005; these read LENR…EHEY and LKYEKDAKRNAK. Composition is skewed to polar residues over residues 1138–1162, 1221–1235, and 1326–1348; these read NPEN…NNLS, PPST…SILG, and PTDS…SNQR. Residues 1349 to 1362 are compositionally biased toward low complexity; the sequence is SLSSGNDSKGDSSS. 2 stretches are compositionally biased toward polar residues: residues 1363–1391 and 1418–1433; these read QENS…SGPS and SNTD…QNAK.

In terms of processing, could be the target of the SNF1/CAT1 - SNF4/CAT3 kinase complex.

The protein localises to the nucleus. Functionally, activator of the gluconeogenic enzymes FBP1 and PCK1 genes. This is Regulatory protein CAT8 (CAT8) from Saccharomyces cerevisiae (strain ATCC 204508 / S288c) (Baker's yeast).